The following is a 240-amino-acid chain: Eukaryotic translation initiation factor 4E-3 (240 aa).

Residues 1–51 (MVVTDSPVSGIMADQNIDPNTTTSPSPKEKHVSAIKAISGDEKAPSKEKKN) form a disordered region. A compositionally biased stretch (polar residues) spans 17 to 26 (IDPNTTTSPS). Residues 39-51 (SGDEKAPSKEKKN) are compositionally biased toward basic and acidic residues. EIF4G-binding regions lie at residues 65-68 (HCFQ) and 75-111 (FDNP…NNIH). MRNA is bound by residues 83 to 88 (NQVIWG), K115, and 133 to 134 (WE). Cysteines 138 and 176 form a disulfide. The segment at 159–168 (NTLLALVGEQ) is EIF4G-binding. MRNA is bound by residues 183-188 (RARGDR) and 228-232 (KTLDR).

Belongs to the eukaryotic initiation factor 4E family. As to quaternary structure, EIF4F is a multi-subunit complex, the composition of which varies with external and internal environmental conditions. It is composed of at least EIF4A, EIF4E and EIF4G. EIF4E is also known to interact with other partners. In higher plants two isoforms of EIF4F have been identified, named isoform EIF4F and isoform EIF(iso)4F. Isoform EIF4F has subunits p220 and p26, whereas isoform EIF(iso)4F has subunits p82 and p28. Post-translationally, according to the redox status, the Cys-138-Cys-176 disulfide bridge may have a role in regulating protein function by affecting its ability to bind capped mRNA.

The protein resides in the nucleus. Its subcellular location is the cytoplasm. Component of the protein complex eIF4F, which is involved in the recognition of the mRNA cap, ATP-dependent unwinding of 5'-terminal secondary structure and recruitment of mRNA to the ribosome. Recognizes and binds the 7-methylguanosine-containing mRNA cap during an early step in the initiation of protein synthesis and facilitates ribosome binding by inducing the unwinding of the mRNAs secondary structures. The chain is Eukaryotic translation initiation factor 4E-3 from Arabidopsis thaliana (Mouse-ear cress).